A 142-amino-acid chain; its full sequence is Potassium voltage-gated channel subfamily E regulatory beta subunit 5 (142 aa).

Residues asparagine 2 and asparagine 25 are each glycosylated (N-linked (GlcNAc...) asparagine). Residues 61-81 (LYILLIMIFYACLAGGLILAY) traverse the membrane as a helical segment. The Cytoplasmic portion of the chain corresponds to 82–142 (TRSRKLVEAK…PALAQGAERV (61 aa)). Positions 119–142 (SQAEGRRQLASEGLPALAQGAERV) are disordered.

It belongs to the potassium channel KCNE family. Interacts with KCNQ1; impairs KCNQ1 localization in lipid rafts and only conducts current upon strong and continued depolarization. In terms of tissue distribution, highly expressed in heart, skeletal muscle, brain, spinal cord and placenta.

The protein resides in the membrane. Potassium channel ancillary subunit that is essential for generation of some native K(+) currents by virtue of formation of heteromeric ion channel complex with voltage-gated potassium (Kv) channel pore-forming alpha subunits. Functions as an inhibitory beta-subunit of the repolarizing cardiac potassium ion channel KCNQ1. This is Potassium voltage-gated channel subfamily E regulatory beta subunit 5 (KCNE5) from Homo sapiens (Human).